Here is a 1188-residue protein sequence, read N- to C-terminus: Major DNA-binding protein (1188 aa).

Positions 838–839 match the Required for filament formation motif; that stretch reads FW. Positions 1145 to 1175 are disordered; that stretch reads CDDDDADKDAPHGAKSDVPNGDDEDVFAGPS. A required for nuclear localization region spans residues 1166–1188; it reads DDEDVFAGPSAKKRTLATEILFC.

This sequence belongs to the herpesviridae major DNA-binding protein family. As to quaternary structure, homooligomers. Forms double-helical filaments necessary for the formation of replication compartments within the host nucleus. Interacts with the origin-binding protein. Interacts with the helicase primase complex; this interaction stimulates primer synthesis activity of the helicase-primase complex. Interacts with the DNA polymerase. Interacts with the alkaline exonuclease; this interaction increases its nuclease processivity.

It is found in the host nucleus. Functionally, plays several crucial roles in viral infection. Participates in the opening of the viral DNA origin to initiate replication by interacting with the origin-binding protein. May disrupt loops, hairpins and other secondary structures present on ssDNA to reduce and eliminate pausing of viral DNA polymerase at specific sites during elongation. Promotes viral DNA recombination by performing strand-transfer, characterized by the ability to transfer a DNA strand from a linear duplex to a complementary single-stranded DNA circle. Can also catalyze the renaturation of complementary single strands. Additionally, reorganizes the host cell nucleus, leading to the formation of prereplicative sites and replication compartments. This process is driven by the protein which can form double-helical filaments in the absence of DNA. This is Major DNA-binding protein from Amazona oratrix (yellow-headed parrot).